The sequence spans 525 residues: uncharacterized protein (525 aa).

The next 2 membrane-spanning stretches (helical) occupy residues 36–56 (AVAA…TLAL) and 61–81 (ALPA…AAAI). One can recognise a PAC domain in the interval 173–228 (SAVDIRLERTSADGPQFAHIYCEMTPLRDAEGNLLAIVAQSRDVSEEARLQAEAAA). The Histidine kinase domain maps to 246 to 466 (AVSHELRTPL…VIVVTIPSDA (221 aa)). Phosphohistidine; by autocatalysis is present on His249. The tract at residues 506-525 (LHTGEIGREGGHGAAQAKTA) is disordered.

It is found in the cell membrane. It catalyses the reaction ATP + protein L-histidine = ADP + protein N-phospho-L-histidine.. This is an uncharacterized protein from Rhizobium meliloti (strain 1021) (Ensifer meliloti).